A 300-amino-acid polypeptide reads, in one-letter code: Probable mitochondrial 2-oxodicarboxylate carrier (300 aa).

A disordered region spans residues 1–20 (MTSKGNAGNPPTPTPAPVKS). Solcar repeat units follow at residues 21 to 104 (QPLW…YEKQ), 114 to 200 (PTQM…IKSA), and 209 to 295 (GVLV…VMKL). 6 helical membrane passes run 27 to 47 (LVSG…LDVV), 74 to 93 (LKMY…KRAI), 120 to 140 (IGSG…FELV), 171 to 191 (GFFK…GGYF), 209 to 229 (GVLV…TMLN), and 278 to 298 (LGPG…LLAG).

This sequence belongs to the mitochondrial carrier (TC 2.A.29) family.

It is found in the mitochondrion inner membrane. It catalyses the reaction 2-oxoadipate(in) + 2-oxoglutarate(out) = 2-oxoadipate(out) + 2-oxoglutarate(in). The catalysed reaction is hexanedioate(in) + 2-oxoglutarate(out) = hexanedioate(out) + 2-oxoglutarate(in). The enzyme catalyses L-2-aminoadipate(in) + 2-oxoglutarate(out) = L-2-aminoadipate(out) + 2-oxoglutarate(in). It carries out the reaction glutarate(in) + 2-oxoglutarate(out) = glutarate(out) + 2-oxoglutarate(in). It catalyses the reaction 2-oxoheptanedioate(in) + 2-oxoglutarate(out) = 2-oxoheptanedioate(out) + 2-oxoglutarate(in). The catalysed reaction is heptanedioate(in) + 2-oxoglutarate(out) = heptanedioate(out) + 2-oxoglutarate(in). The enzyme catalyses citrate(in) + 2-oxoglutarate(out) = citrate(out) + 2-oxoglutarate(in). In terms of biological role, transports dicarboxylates across the inner membranes of mitochondria by a counter-exchange mechanism. Can transport 2-oxoadipate (2-oxohexanedioate), 2-oxoglutarate, adipate (hexanedioate), glutarate, and to a lesser extent, pimelate (heptanedioate), 2-oxopimelate (2-oxoheptanedioate), 2-aminoadipate (2-aminohexanedioate), oxaloacetate, and citrate. Plays a central role in catabolism of lysine, hydroxylysine, and tryptophan, by transporting common metabolite intermediates (such as 2-oxoadipate) into the mitochondria, where it is converted into acetyl-CoA and can enter the citric acid (TCA) cycle. This is Probable mitochondrial 2-oxodicarboxylate carrier (mcfT) from Dictyostelium discoideum (Social amoeba).